The sequence spans 349 residues: MSSLSGKVQTVLGLVEPSQLGRTLTHEHLTMTFDSFYCPPPPCHEVTSKEPIMMKNLFWIQKNPYSHRENLQLNQEVGAIREELLYFKAKGGGALVENTTTGLSRDVHTLKWLAEQTGVHIIAGAGFYVDATHSAATRAMSVEQLTDVLINEILHGADGTSIKCGVIGEIGCSWPLTDSERKILEATAHAQAQLGCPVIIHPGRNPGAPFQIIRILQEAGADISKTVMSHLDRTIFDKKELLEFAQLGCYLEYDLFGTELLNYQLSPDIDMPDDNKRIRRVHFLVDEGYEDRILMAHDIHTKHRLMKYGGHGYSHILTNIVPKMLLRGLTERVLDKILIENPKQWLTFK.

H26, H28, E169, H201, H230, and D298 together coordinate a divalent metal cation.

This sequence belongs to the metallo-dependent hydrolases superfamily. Phosphotriesterase family. Requires a divalent metal cation as cofactor. In terms of tissue distribution, expressed in the kidney, liver and brainstem.

The protein localises to the cytoplasm. Its subcellular location is the cytosol. The enzyme catalyses N-acetyltaurine + H2O = taurine + acetate. It catalyses the reaction N-propanoyltaurine + H2O = propanoate + taurine. It carries out the reaction N-acetyl-L-methionine + H2O = L-methionine + acetate. The catalysed reaction is N-acetyl-L-isoleucine + H2O = L-isoleucine + acetate. The enzyme catalyses N-acetyl-L-leucine + H2O = L-leucine + acetate. It catalyses the reaction N-acetyl-L-valine + H2O = L-valine + acetate. N-acetyltaurine hydrolase that regulates feeding by catalyzing the hydrolysis of N-acetyltaurine into taurine and acetate. N-acetyltaurine has anorexigenic and anti-obesity effects that are dependent on GFRAL receptor and GDF15. PTER also acts on other N-acetyl amino acids (Met, Ile, Leu, Val) and N-propionyltaurine, but at lower rates. The sequence is that of N-acetyltaurine hydrolase from Mus musculus (Mouse).